The sequence spans 319 residues: RNA exonuclease 4 (319 aa).

The disordered stretch occupies residues 1 to 75; the sequence is MAALSSNWKK…GGVHSSKIEE (75 aa). An Exonuclease domain is found at 132–293; sequence KYIAIDCEMV…FRKHKSAFDV (162 aa). The interval 295-319 is disordered; that stretch reads HANRYAPKTASGGGQKGNKPKKKKK.

The protein belongs to the REXO4 family.

Its subcellular location is the nucleus. In terms of biological role, exoribonuclease involved in ribosome biosynthesis. Involved in the processing of ITS1, the internal transcribed spacer localized between the 18S and 5.8S rRNAs. The sequence is that of RNA exonuclease 4 (REX4) from Gibberella zeae (strain ATCC MYA-4620 / CBS 123657 / FGSC 9075 / NRRL 31084 / PH-1) (Wheat head blight fungus).